We begin with the raw amino-acid sequence, 968 residues long: RNA polymerase-associated protein RapA (968 aa).

The Helicase ATP-binding domain maps to 164–334 (DVGRRHAPRV…FARLRLLDPN (171 aa)). 177–184 (DEVGLGKT) contacts ATP. A DEAH box motif is present at residues 280 to 283 (DEAH). Residues 490 to 685 (RVEWLMGYLT…ALKAQLEQGR (196 aa)) enclose the Helicase C-terminal domain.

The protein belongs to the SNF2/RAD54 helicase family. RapA subfamily. Interacts with the RNAP. Has a higher affinity for the core RNAP than for the holoenzyme. Its ATPase activity is stimulated by binding to RNAP.

Transcription regulator that activates transcription by stimulating RNA polymerase (RNAP) recycling in case of stress conditions such as supercoiled DNA or high salt concentrations. Probably acts by releasing the RNAP, when it is trapped or immobilized on tightly supercoiled DNA. Does not activate transcription on linear DNA. Probably not involved in DNA repair. In Salmonella paratyphi A (strain ATCC 9150 / SARB42), this protein is RNA polymerase-associated protein RapA.